The chain runs to 520 residues: TnpB-like protein L79 (520 aa).

The span at 21 to 47 (GSKTKKKVFVKKKPPDKKPLKKPVKKT) shows a compositional bias: basic residues. The disordered stretch occupies residues 21-52 (GSKTKKKVFVKKKPPDKKPLKKPVKKTVKTDK). Positions 474, 477, 491, and 494 each coordinate Zn(2+).

This sequence in the central section; belongs to the transposase 2 family. The protein in the C-terminal section; belongs to the transposase 35 family.

The protein is TnpB-like protein L79 of Acanthamoeba polyphaga mimivirus (APMV).